Consider the following 987-residue polypeptide: Pro-apoptotic serine protease NMA111 (987 aa).

The tract at residues 1–29 (MPDIPTKRRLSNGSVIDNTNKRQMQSSFV) is disordered. Positions 11-28 (SNGSVIDNTNKRQMQSSF) are enriched in polar residues. The serine protease stretch occupies residues 69–262 (VKSVVSIQFT…LPVYRPLRAL (194 aa)). Residues His110, Asp141, and Ser224 each act as charge relay system in the active site. 2 consecutive PDZ domains span residues 279–364 (EWSL…VVIQ) and 878–950 (PHHG…VSFD).

The protein belongs to the peptidase S1C family.

It is found in the nucleus. Functionally, nuclear serine protease which mediates apoptosis. The chain is Pro-apoptotic serine protease NMA111 (NMA111) from Debaryomyces hansenii (strain ATCC 36239 / CBS 767 / BCRC 21394 / JCM 1990 / NBRC 0083 / IGC 2968) (Yeast).